The chain runs to 214 residues: tRNA (guanine-N(7)-)-methyltransferase (214 aa).

Residues Glu45, Glu70, Asp97, and Asp119 each contribute to the S-adenosyl-L-methionine site. The active site involves Asp119. Residues Lys123, Asp155, and 192–195 (TEYE) contribute to the substrate site.

Belongs to the class I-like SAM-binding methyltransferase superfamily. TrmB family.

The enzyme catalyses guanosine(46) in tRNA + S-adenosyl-L-methionine = N(7)-methylguanosine(46) in tRNA + S-adenosyl-L-homocysteine. Its pathway is tRNA modification; N(7)-methylguanine-tRNA biosynthesis. Catalyzes the formation of N(7)-methylguanine at position 46 (m7G46) in tRNA. This Clostridioides difficile (strain 630) (Peptoclostridium difficile) protein is tRNA (guanine-N(7)-)-methyltransferase.